A 633-amino-acid chain; its full sequence is Pesticidal crystal protein Cry2Ad (633 aa).

It belongs to the delta endotoxin family.

Functionally, promotes colloidosmotic lysis by binding to the midgut epithelial cells of insects. This is Pesticidal crystal protein Cry2Ad (cry2Ad) from Bacillus thuringiensis.